A 358-amino-acid chain; its full sequence is DNA replication and repair protein RecF (358 aa).

Residue 30–37 (GNNGSGKT) coordinates ATP.

This sequence belongs to the RecF family.

It is found in the cytoplasm. In terms of biological role, the RecF protein is involved in DNA metabolism; it is required for DNA replication and normal SOS inducibility. RecF binds preferentially to single-stranded, linear DNA. It also seems to bind ATP. The polypeptide is DNA replication and repair protein RecF (Actinobacillus succinogenes (strain ATCC 55618 / DSM 22257 / CCUG 43843 / 130Z)).